Consider the following 666-residue polypeptide: NAD(P)H-quinone oxidoreductase subunit 5, organellar chromatophore 1 (666 aa).

The next 15 membrane-spanning stretches (helical) occupy residues 8-28 (LVWLIPILPFIGAFLVGFGLI), 41-61 (AALLLISSVGISAVLSFMVLA), 90-110 (VDPIGATMLALVSTVAILVMV), 121-141 (SYVRFFTYLGLFTSSMLALIL), 145-165 (LLEIYVFWELVGMCSYLLIGF), 190-210 (FLLGILGLFWATNSFDFQIVA), 220-240 (GSIPHWAAIALCLLLFMGPMA), 259-279 (TPISALIHAATMVAAGVFLVA), 293-313 (IIVAVIGTITCFLGASIALIQ), 328-348 (LGYMMLAMGCGAPVAGMFHLI), 396-416 (GITFFIGCVAISGIPPLAGFW), 428-448 (SYPLLWGVGLFTAGLTAFYMF), 497-517 (TLPLVILSVPSVLIGFLGSPW), 542-562 (FLPLAIASVMISTCGIVIATI), and 643-663 (GRPQFYALIIFGGVISLIVIF).

The protein belongs to the complex I subunit 5 family. NDH is composed of at least 16 different subunits, 5 of which are encoded in the nucleus.

Its subcellular location is the plastid. It is found in the organellar chromatophore thylakoid membrane. The catalysed reaction is a plastoquinone + NADH + (n+1) H(+)(in) = a plastoquinol + NAD(+) + n H(+)(out). It carries out the reaction a plastoquinone + NADPH + (n+1) H(+)(in) = a plastoquinol + NADP(+) + n H(+)(out). In terms of biological role, NDH shuttles electrons from NAD(P)H:plastoquinone, via FMN and iron-sulfur (Fe-S) centers, to quinones in the photosynthetic chain and possibly in a chloroplast respiratory chain. The immediate electron acceptor for the enzyme in this species is believed to be plastoquinone. Couples the redox reaction to proton translocation, and thus conserves the redox energy in a proton gradient. This is NAD(P)H-quinone oxidoreductase subunit 5, organellar chromatophore 1 (ndhF1) from Paulinella chromatophora.